Reading from the N-terminus, the 618-residue chain is Proline--tRNA ligase (618 aa).

This sequence belongs to the class-II aminoacyl-tRNA synthetase family. ProS type 1 subfamily. As to quaternary structure, homodimer.

Its subcellular location is the cytoplasm. It carries out the reaction tRNA(Pro) + L-proline + ATP = L-prolyl-tRNA(Pro) + AMP + diphosphate. Functionally, catalyzes the attachment of proline to tRNA(Pro) in a two-step reaction: proline is first activated by ATP to form Pro-AMP and then transferred to the acceptor end of tRNA(Pro). As ProRS can inadvertently accommodate and process non-cognate amino acids such as alanine and cysteine, to avoid such errors it has two additional distinct editing activities against alanine. One activity is designated as 'pretransfer' editing and involves the tRNA(Pro)-independent hydrolysis of activated Ala-AMP. The other activity is designated 'posttransfer' editing and involves deacylation of mischarged Ala-tRNA(Pro). The misacylated Cys-tRNA(Pro) is not edited by ProRS. The chain is Proline--tRNA ligase from Streptococcus pyogenes serotype M28 (strain MGAS6180).